The primary structure comprises 299 residues: Protoheme IX farnesyltransferase 1 (299 aa).

8 helical membrane passes run 25-45 (VVVL…RAGV), 47-67 (WTVL…AAAV), 95-115 (TGAL…LLTF), 119-139 (LTAW…TGFL), 147-167 (IVIG…AATG), 173-193 (PLLL…ALAI), 226-246 (ALLA…LYLI), and 279-299 (IWYL…LLNL).

This sequence belongs to the UbiA prenyltransferase family. Protoheme IX farnesyltransferase subfamily.

Its subcellular location is the cell inner membrane. The catalysed reaction is heme b + (2E,6E)-farnesyl diphosphate + H2O = Fe(II)-heme o + diphosphate. It participates in porphyrin-containing compound metabolism; heme O biosynthesis; heme O from protoheme: step 1/1. In terms of biological role, converts heme B (protoheme IX) to heme O by substitution of the vinyl group on carbon 2 of heme B porphyrin ring with a hydroxyethyl farnesyl side group. The sequence is that of Protoheme IX farnesyltransferase 1 from Pseudomonas fluorescens (strain Pf0-1).